We begin with the raw amino-acid sequence, 190 residues long: Somatotropin (190 aa).

His19 is a Zn(2+) binding site. The cysteines at positions 52 and 163 are disulfide-linked. Ser105 bears the Phosphoserine mark. Glu172 serves as a coordination point for Zn(2+). Cys180 and Cys188 are disulfide-bonded.

It belongs to the somatotropin/prolactin family.

The protein localises to the secreted. Its function is as follows. Plays an important role in growth control. Its major role in stimulating body growth is to stimulate the liver and other tissues to secrete IGF1. It stimulates both the differentiation and proliferation of myoblasts. It also stimulates amino acid uptake and protein synthesis in muscle and other tissues. In Vulpes vulpes (Red fox), this protein is Somatotropin (GH1).